A 556-amino-acid chain; its full sequence is MEDSQMDTSSPTESSSEVNFTAEEDKSQETRSAAGVCYCGKERNLNIVELLCATCSRWVHETCVSYQLGKGKLLPFITNYVFVCKNCSASGLESFRKSQATISQMCHCAIANMQQAASRDGRRQIQFSKDKEIIPYIEQYWEAMTTMPRRLTQSWYSTVQRSLVKDVQTLFTYEEHAEHGAMYGLFHQDLRIIKPNYESMSKSGALRLTDDGYTQASLSKNNRQKRKFPGTDSGPTGKKGRPSSDITANVKLPPHGYPLEHPFNKDGYRYILAEPDPHAPFRQEFDESSDWAGKPIPGWLYRILVPHSVLLALHDRAPQLKISEDRLAVTGERGYCMVRATHSVNRGCWYFEVTIEEMPDGAATRLGWGREYGNLQAPLGYDKFGYSWRSRKGTKFTESHGKHYSDAYVEGDTLGFLIELPEEASLDYLPNTFKDRPLVKFKSHLYYEDKDKITETLKNLHILQGSRIEFFKNGQSQGVAFEDIYAGSYFPAISIHKSATVSVNFGPAFKYPEVLVEHKAKGMHDRVEELITEQCLADTLYLTEHDGRLRLDNMGL.

A compositionally biased stretch (polar residues) spans 1-19 (MEDSQMDTSSPTESSSEVN). The segment at 1 to 27 (MEDSQMDTSSPTESSSEVNFTAEEDKS) is disordered. A PHD-type zinc finger spans residues 34–90 (AGVCYCGKERNLNIVELLCATCSRWVHETCVSYQLGKGKLLPFITNYVFVCKNCSAS). Zn(2+) is bound by residues cysteine 37, cysteine 39, cysteine 52, cysteine 55, histidine 60, cysteine 63, cysteine 84, and cysteine 87. The tract at residues 216-251 (ASLSKNNRQKRKFPGTDSGPTGKKGRPSSDITANVK) is disordered. In terms of domain architecture, B30.2/SPRY spans 288–510 (SSDWAGKPIP…VSVNFGPAFK (223 aa)).

As to quaternary structure, core component of several methyltransferase-containing complexes. Component of the SET1C/COMPASS complex, composed at least of the catalytic subunit Set1, wds/WDR5, Wdr82, Rbbp5, ash2, Cfp1/CXXC1, hcf and Dpy-30L1. Component of the MLL3/4 (Histone-lysine N-methyltransferase/demethylase TRR) complex composed at least of the catalytic subunit trr, ash2, Rbbp5, Dpy-30L1, wds, hcf, ptip, Pa1, Utx, Lpt and Ncoa6. Interacts with hcf. Interacts with trr. Interacts (via B30.2/SPRY domain) with sktl; the interaction is direct. In terms of tissue distribution, in larvae and pupae, expressed in imaginal disks, salivary gland and fat body cells. No expression detected in central nervous system (at protein level).

It localises to the nucleus. The protein localises to the chromosome. Transcriptional regulator. Regulates a number of genes involved in wing development including activation of net and bs and repression of rho and kni and controls vein-intervein patterning during wing development. Required for correct expression of a number of homeotic genes including Scr in the first leg imaginal disk and Ubx in the third leg imaginal disk and haltere disks. Required for stabilization of the histone-lysine N-methyltransferase trr and for trimethylation of 'Lys-4' of histone H3. Together with sktl probably plays a role in maintenance of transcriptionally active chromatin through down-regulation of histone H1 hyperphosphorylation. This chain is Set1/Ash2 histone methyltransferase complex subunit ASH2, found in Drosophila melanogaster (Fruit fly).